The following is a 130-amino-acid chain: Protein ApaG (130 aa).

The region spanning 3–127 (RAVTRRIEVT…FSLDSPEGKR (125 aa)) is the ApaG domain.

In Rhodopseudomonas palustris (strain ATCC BAA-98 / CGA009), this protein is Protein ApaG.